A 255-amino-acid chain; its full sequence is uncharacterized protein (255 aa).

Positions 1–23 are cleaved as a signal peptide; it reads MKRLNKLVLGINLLFLVISITAG. Cys24 is lipidated: N-palmitoyl cysteine. Residue Cys24 is the site of S-diacylglycerol cysteine attachment.

This sequence belongs to the staphylococcal tandem lipoprotein family.

The protein localises to the cell membrane. This is an uncharacterized protein from Staphylococcus aureus (strain MRSA252).